Here is a 273-residue protein sequence, read N- to C-terminus: Cell division cycle-associated protein 3 (273 aa).

2 disordered regions span residues 1–231 (MGST…ALSE) and 251–273 (GGGA…LMES). Serine 29 and serine 31 each carry phosphoserine. The span at 32-45 (AGIQRTPIQVESSP) shows a compositional bias: polar residues. A Phosphothreonine modification is found at threonine 37. Phosphoserine occurs at positions 44 and 67. Phosphothreonine is present on threonine 75. The tract at residues 90–124 (KELSEVFETEVSETEVSESISSPVLGLPQETPLSS) is F-box-like. Position 93 is a phosphoserine (serine 93). Residues 94–105 (EVFETEVSETEV) are compositionally biased toward acidic residues. Polar residues-rich tracts occupy residues 144-154 (PWSQTELNSKQ) and 164-175 (STETMVSGQTSD). At serine 204 the chain carries Phosphoserine. A Phosphothreonine modification is found at threonine 207. The span at 210–220 (QDDNSPGTLTL) shows a compositional bias: polar residues. Serine 214 bears the Phosphoserine mark. Threonine 217 is subject to Phosphothreonine. The KEN box signature appears at 263 to 265 (KEN).

In terms of assembly, interacts with SKP1. Part of a SCF (SKP1-cullin-F-box) protein ligase complex. In terms of processing, ubiquitinated and degraded by the APC/C-Cdh1 complex.

It localises to the cytoplasm. The protein localises to the cytosol. Its pathway is protein modification; protein ubiquitination. F-box-like protein which is required for entry into mitosis. Acts by participating in E3 ligase complexes that mediate the ubiquitination and degradation of WEE1 kinase at G2/M phase. The sequence is that of Cell division cycle-associated protein 3 (Cdca3) from Rattus norvegicus (Rat).